The following is a 210-amino-acid chain: Ribosomal RNA small subunit methyltransferase G (210 aa).

Residues Gly75, Phe80, 98-100 (EST), 126-127 (AE), and Arg141 contribute to the S-adenosyl-L-methionine site.

It belongs to the methyltransferase superfamily. RNA methyltransferase RsmG family.

The protein localises to the cytoplasm. In terms of biological role, specifically methylates the N7 position of a guanine in 16S rRNA. This Solibacter usitatus (strain Ellin6076) protein is Ribosomal RNA small subunit methyltransferase G.